A 290-amino-acid polypeptide reads, in one-letter code: Aquaporin-3 (290 aa).

At 1–24 (MGRQKELVTRCGEMLHIRYRLLRQ) the chain is on the cytoplasmic side. The chain crosses the membrane as a helical span at residues 25–42 (ALAECLGTLILVMFGCGS). The Extracellular portion of the chain corresponds to 43-56 (VAQVVLSRGTHGGF). The helical transmembrane segment at 57–74 (LTINLAFGFAVTLGILVA) threads the bilayer. The Cytoplasmic segment spans residues 75–78 (GQVS). An intramembrane region (discontinuously helical) is located at residues 79–92 (GAHLNPAVTFAMCF). Positions 83–85 (NPA) match the NPA 1 motif. Over 93 to 100 (LAREPWIK) the chain is Cytoplasmic. Residues 101-121 (LPVYTLAQTLGAFLGAGIIFG) traverse the membrane as a helical segment. The Extracellular segment spans residues 122 to 159 (LYYDAIWAFANNQLIVSGPNGTAGIFATYPSGHLDMVN). Asn-141 is a glycosylation site (N-linked (GlcNAc...) asparagine). A helical transmembrane segment spans residues 160–177 (GFFDQFIGTASLIVCVLA). The Cytoplasmic segment spans residues 178–189 (IVDPNNNPVPRG). The chain crosses the membrane as a helical span at residues 190 to 206 (LEAFTVGLVVLVIGTSM). Residues 207 to 210 (GFNS) are Extracellular-facing. The segment at residues 211–224 (GYAVNPARDFGPRL) is an intramembrane region (discontinuously helical). An NPA 2 motif is present at residues 215–217 (NPA). Residues 225–242 (FTAIAGWGSEVFTTGRHW) are Extracellular-facing. A helical membrane pass occupies residues 243–264 (WWVPIASPLLGSIAGVFVYQLM). Residues 265–290 (IGCHLEPPPPSTDEENVKLSQVKHKE) are Cytoplasmic-facing.

Belongs to the MIP/aquaporin (TC 1.A.8) family. In terms of assembly, homotetramer; each monomer provides an independent glycerol/water pore. Could also exist in other oligomeric states. Highly expressed in stomach and spleen, with lower expression in kidney and lung.

Its subcellular location is the cell membrane. It localises to the basolateral cell membrane. The catalysed reaction is glycerol(in) = glycerol(out). The enzyme catalyses H2O(in) = H2O(out). It carries out the reaction urea(in) = urea(out). It catalyses the reaction H2O2(out) = H2O2(in). Functionally, aquaglyceroporins form homotetrameric transmembrane channels, with each monomer independently mediating glycerol and water transport across the plasma membrane along their osmotic gradient. Could also be permeable to urea. Also participates in cell permeability to H2O2 and H2O2-mediated signaling. In skin, transports glycerol to the epidermis and stratum corneum, where it maintains hydration, elasticity, and supports lipid biosynthesis for barrier repair. In kidney, contributes to the reabsorption of water, helping the body maintain proper fluid balance. The chain is Aquaporin-3 from Sus scrofa (Pig).